The sequence spans 389 residues: Glutamate 5-kinase (389 aa).

An ATP-binding site is contributed by lysine 16. Substrate is bound by residues serine 56, aspartate 143, and asparagine 155. 175-176 lines the ATP pocket; it reads SD. One can recognise a PUA domain in the interval 281-358; it reads AGELHVDEGA…AEIEAILGYA (78 aa).

It belongs to the glutamate 5-kinase family.

Its subcellular location is the cytoplasm. The enzyme catalyses L-glutamate + ATP = L-glutamyl 5-phosphate + ADP. It participates in amino-acid biosynthesis; L-proline biosynthesis; L-glutamate 5-semialdehyde from L-glutamate: step 1/2. In terms of biological role, catalyzes the transfer of a phosphate group to glutamate to form L-glutamate 5-phosphate. The sequence is that of Glutamate 5-kinase from Rhizobium rhizogenes (strain K84 / ATCC BAA-868) (Agrobacterium radiobacter).